The sequence spans 255 residues: Putative glutamine amidotransferase YafJ (255 aa).

Cys2 acts as the For GATase activity in catalysis. One can recognise a Glutamine amidotransferase type-2 domain in the interval 2–251 (CELLGMSANV…PGEWRLFCLG (250 aa)).

The sequence is that of Putative glutamine amidotransferase YafJ (yafJ) from Escherichia coli (strain K12).